Reading from the N-terminus, the 175-residue chain is Transcriptional repressor NrdR (175 aa).

A zinc finger spans residues 3–32 (CPYCSHPDSKVIDSRDVDDGVRRRRECVVC). Residues 47–137 (LFVVKKDQRR…VYREFTDITQ (91 aa)) enclose the ATP-cone domain.

This sequence belongs to the NrdR family. The cofactor is Zn(2+).

Its function is as follows. Negatively regulates transcription of bacterial ribonucleotide reductase nrd genes and operons by binding to NrdR-boxes. The protein is Transcriptional repressor NrdR of Dehalococcoides mccartyi (strain ATCC BAA-2100 / JCM 16839 / KCTC 5957 / BAV1).